The primary structure comprises 348 residues: Holliday junction branch migration complex subunit RuvB (348 aa).

A large ATPase domain (RuvB-L) region spans residues 4 to 184 (TDRLIAASGR…FGIVQRLEFY (181 aa)). ATP contacts are provided by residues I23, R24, G65, K68, T69, T70, 131–133 (EDF), R174, Y184, and R221. T69 contacts Mg(2+). The small ATPAse domain (RuvB-S) stretch occupies residues 185-255 (SNKDLATIVS…VADMALNLLD (71 aa)). The segment at 258–348 (ERGFDHSDRR…GGEYAAQDDE (91 aa)) is head domain (RuvB-H). DNA contacts are provided by R294, R313, and R318.

The protein belongs to the RuvB family. As to quaternary structure, homohexamer. Forms an RuvA(8)-RuvB(12)-Holliday junction (HJ) complex. HJ DNA is sandwiched between 2 RuvA tetramers; dsDNA enters through RuvA and exits via RuvB. An RuvB hexamer assembles on each DNA strand where it exits the tetramer. Each RuvB hexamer is contacted by two RuvA subunits (via domain III) on 2 adjacent RuvB subunits; this complex drives branch migration. In the full resolvosome a probable DNA-RuvA(4)-RuvB(12)-RuvC(2) complex forms which resolves the HJ.

Its subcellular location is the cytoplasm. The catalysed reaction is ATP + H2O = ADP + phosphate + H(+). In terms of biological role, the RuvA-RuvB-RuvC complex processes Holliday junction (HJ) DNA during genetic recombination and DNA repair, while the RuvA-RuvB complex plays an important role in the rescue of blocked DNA replication forks via replication fork reversal (RFR). RuvA specifically binds to HJ cruciform DNA, conferring on it an open structure. The RuvB hexamer acts as an ATP-dependent pump, pulling dsDNA into and through the RuvAB complex. RuvB forms 2 homohexamers on either side of HJ DNA bound by 1 or 2 RuvA tetramers; 4 subunits per hexamer contact DNA at a time. Coordinated motions by a converter formed by DNA-disengaged RuvB subunits stimulates ATP hydrolysis and nucleotide exchange. Immobilization of the converter enables RuvB to convert the ATP-contained energy into a lever motion, pulling 2 nucleotides of DNA out of the RuvA tetramer per ATP hydrolyzed, thus driving DNA branch migration. The RuvB motors rotate together with the DNA substrate, which together with the progressing nucleotide cycle form the mechanistic basis for DNA recombination by continuous HJ branch migration. Branch migration allows RuvC to scan DNA until it finds its consensus sequence, where it cleaves and resolves cruciform DNA. The chain is Holliday junction branch migration complex subunit RuvB from Pseudomonas entomophila (strain L48).